The following is a 375-amino-acid chain: MDLSNRRNPLRDLSFPPPPPPPIFHRASSTGTSFPILAVAVIGILATAFLLVSYYVFVIKCCLNWHRIDILGRFSLSRRRRNDQDPLMVYSPELRSRGLDESVIRAIPIFKFKKRYDQNDGVFTGEGEEEEEKRSQECSVCLSEFQDEEKLRIIPNCSHLFHIDCIDVWLQNNANCPLCRTRVSCDTSFPPDRVSAPSTSPENLVMLRGENEYVVIELGSSIGSDRDSPRHGRLLTGQERSNSGYLLNENTQNSISPSPKKLDRGGLPRKFRKLHKMTSMGDECIDIRRGKDEQFGSIQPIRRSISMDSSADRQLYLAVQEAIRKNREVLVVGDGGGCSSSSGNVSNSKVKRSFFSFGSSRRSRSSSKLPLYFEP.

The segment at 1 to 20 (MDLSNRRNPLRDLSFPPPPP) is disordered. The helical transmembrane segment at 39–59 (VAVIGILATAFLLVSYYVFVI) threads the bilayer. Residues 138 to 180 (CSVCLSEFQDEEKLRIIPNCSHLFHIDCIDVWLQNNANCPLCR) form an RING-type; atypical zinc finger. Disordered stretches follow at residues 223-266 (GSDR…DRGG) and 356-375 (SFGS…YFEP). Polar residues predominate over residues 238–257 (QERSNSGYLLNENTQNSISP).

Belongs to the RING-type zinc finger family. ATL subfamily.

The protein localises to the membrane. The catalysed reaction is S-ubiquitinyl-[E2 ubiquitin-conjugating enzyme]-L-cysteine + [acceptor protein]-L-lysine = [E2 ubiquitin-conjugating enzyme]-L-cysteine + N(6)-ubiquitinyl-[acceptor protein]-L-lysine.. Its pathway is protein modification; protein ubiquitination. This Arabidopsis thaliana (Mouse-ear cress) protein is RING-H2 finger protein ATL16 (ATL16).